The following is a 199-amino-acid chain: GTP-binding protein Di-Ras2 (199 aa).

GTP-binding positions include glycine 14–serine 21, arginine 33–threonine 39, aspartate 61–serine 65, and asparagine 121–aspartate 124. The residue at position 35 (serine 35) is a Phosphoserine. The Effector region motif lies at tyrosine 36 to tyrosine 44. Serine 126 bears the Phosphoserine mark. Residue alanine 152 to lysine 153 participates in GTP binding. The residue at position 196 (cysteine 196) is a Cysteine methyl ester. Residue cysteine 196 is the site of S-geranylgeranyl cysteine attachment. Positions valine 197–methionine 199 are cleaved as a propeptide — removed in mature form.

Belongs to the small GTPase superfamily. Di-Ras family. Ubiquitinated by the ECS(ASB11) complex via 'Lys-11'-linked ubiquitin chains, leading to its degradation by the proteasome.

The protein resides in the cell membrane. It catalyses the reaction GTP + H2O = GDP + phosphate + H(+). Functionally, displays low GTPase activity and exists predominantly in the GTP-bound form. This is GTP-binding protein Di-Ras2 (Diras2) from Mus musculus (Mouse).